The following is a 144-amino-acid chain: Large ribosomal subunit protein uL15 (144 aa).

The disordered stretch occupies residues 1-49 (MRLNTLSPAAGSKSAPKRVGRGIGSGLGKTAGRGHKGQKSRSGGGVRVG). The span at 21–31 (RGIGSGLGKTA) shows a compositional bias: gly residues.

It belongs to the universal ribosomal protein uL15 family. In terms of assembly, part of the 50S ribosomal subunit.

In terms of biological role, binds to the 23S rRNA. This chain is Large ribosomal subunit protein uL15, found in Shewanella frigidimarina (strain NCIMB 400).